The following is a 160-amino-acid chain: Large ribosomal subunit protein bL19 (160 aa).

This sequence belongs to the bacterial ribosomal protein bL19 family.

In terms of biological role, this protein is located at the 30S-50S ribosomal subunit interface and may play a role in the structure and function of the aminoacyl-tRNA binding site. The protein is Large ribosomal subunit protein bL19 of Prochlorococcus marinus subsp. pastoris (strain CCMP1986 / NIES-2087 / MED4).